The chain runs to 490 residues: GTPase Der (490 aa).

2 EngA-type G domains span residues 3–166 (PVVA…MDDV) and 203–376 (IKLA…DSST). Residues 9-16 (GRPNVGKS), 56-60 (DTGGI), 118-121 (NKTD), 209-216 (GRPNVGKS), 256-260 (DTAGV), and 321-324 (NKWD) contribute to the GTP site. The 85-residue stretch at 377-461 (RRVSTAMLTR…PIRIQFKEGE (85 aa)) folds into the KH-like domain.

This sequence belongs to the TRAFAC class TrmE-Era-EngA-EngB-Septin-like GTPase superfamily. EngA (Der) GTPase family. In terms of assembly, associates with the 50S ribosomal subunit.

Its function is as follows. GTPase that plays an essential role in the late steps of ribosome biogenesis. The chain is GTPase Der from Salmonella enteritidis PT4 (strain P125109).